We begin with the raw amino-acid sequence, 519 residues long: SMR domain-containing protein At5g58720 (519 aa).

The segment covering 1 to 15 has biased composition (basic residues); the sequence is MKQKNQHKKKKKRSC. 2 disordered regions span residues 1-47 and 92-128; these read MKQK…REIE and ESGD…CSED. Positions 28-47 are enriched in basic and acidic residues; it reads GNKKDVEEERKDGEGKREIE. Positions 98–127 are enriched in low complexity; that stretch reads STSSVASGSSGQETASTSEYGAGSSSSCSE. Residues 428–502 enclose the Smr domain; that stretch reads IDLHGQHVKP…NRGTLLIKLD (75 aa).

As to quaternary structure, interacts with PRL1.

The sequence is that of SMR domain-containing protein At5g58720 from Arabidopsis thaliana (Mouse-ear cress).